The chain runs to 868 residues: Receptor-like protein 32 (868 aa).

Positions 1-32 (MKDSWNSTSIIPFTFSSLIFFLFTFDFQDVFG) are cleaved as a signal peptide. At 33–815 (VPTKHLCRLE…PPELEEEDRE (783 aa)) the chain is on the extracellular side. Asparagine 73, asparagine 109, asparagine 141, and asparagine 165 each carry an N-linked (GlcNAc...) asparagine glycan. 25 LRR repeats span residues 118 to 142 (LRFL…IENF), 143 to 166 (SHLT…IGNL), 168 to 188 (QLTF…FFGN), 189 to 213 (MNQL…LLNL), 214 to 237 (KHLS…MSSL), 239 to 261 (NLEY…LFTI), 262 to 285 (ASLT…NISS), 287 to 310 (STLT…ISKF), 312 to 334 (NLQD…IFTN), 335 to 360 (LKSL…LFSS), 362 to 385 (LNSI…SVAD), 389 to 412 (TQLI…LRSQ), 413 to 436 (HKMT…LWTL), 438 to 459 (KLIF…TEHG), 465 to 489 (KPSM…ICAL), 490 to 515 (RSLI…NLKS), 517 to 538 (LSFL…IFKS), 540 to 560 (RSLD…FIRL), 561 to 586 (SALE…SLKK), 588 to 606 (QVLV…HASF), 607 to 630 (HTLR…YFVN), 675 to 699 (LKIY…IGLL), 700 to 723 (KELH…MGNL), 724 to 747 (RELE…LGNL), and 749 to 772 (YLAY…QFRR). An N-linked (GlcNAc...) asparagine glycan is attached at asparagine 233. 2 N-linked (GlcNAc...) asparagine glycosylation sites follow: asparagine 275 and asparagine 282. N-linked (GlcNAc...) asparagine glycosylation is found at asparagine 342 and asparagine 347. Asparagine 477 and asparagine 503 each carry an N-linked (GlcNAc...) asparagine glycan. Asparagine 574 carries an N-linked (GlcNAc...) asparagine glycan. An N-linked (GlcNAc...) asparagine glycan is attached at asparagine 613. Residues asparagine 706, asparagine 746, asparagine 754, and asparagine 774 are each glycosylated (N-linked (GlcNAc...) asparagine). Residues 816–836 (VFSWIAAAIGFGPGIAFGLTI) traverse the membrane as a helical segment. Over 837 to 868 (RYILVFYKPDWFMHTFGHLQPSAHEKRLRRKQ) the chain is Cytoplasmic.

It belongs to the RLP family.

The protein localises to the cell membrane. In Arabidopsis thaliana (Mouse-ear cress), this protein is Receptor-like protein 32.